The chain runs to 338 residues: tRNA N6-adenosine threonylcarbamoyltransferase (338 aa).

Fe cation is bound by residues H109 and H113. Substrate contacts are provided by residues 132 to 136 (AISGA), D165, G178, and N277. D302 serves as a coordination point for Fe cation.

This sequence belongs to the KAE1 / TsaD family. The cofactor is Fe(2+).

The protein localises to the cytoplasm. It catalyses the reaction L-threonylcarbamoyladenylate + adenosine(37) in tRNA = N(6)-L-threonylcarbamoyladenosine(37) in tRNA + AMP + H(+). Required for the formation of a threonylcarbamoyl group on adenosine at position 37 (t(6)A37) in tRNAs that read codons beginning with adenine. Is involved in the transfer of the threonylcarbamoyl moiety of threonylcarbamoyl-AMP (TC-AMP) to the N6 group of A37, together with TsaE and TsaB. TsaD likely plays a direct catalytic role in this reaction. In Chlamydia trachomatis serovar L2b (strain UCH-1/proctitis), this protein is tRNA N6-adenosine threonylcarbamoyltransferase.